We begin with the raw amino-acid sequence, 579 residues long: MDIFRVLTRGASIRKNGDSNRTQSADFSMANEKKSKTAGSSSTPARDEQQLTKELDFFRNKKIMNKVKSESTKGEGEDEVQEDNQEEDEDHADDETELSGKIITKQDALKLRKSYQGNVSGNSVPLPIGSFEDLITRFQFDKRLLNNLIENNFTEPTPIQSESIPILLHERDMIACAPTGSGKTLAFLIPLLQQIINDKTTVGLKGLIISPTKELANQIFIECSKLANKIYLDKKRPLQVALLSKSLSSKLKNKVISEDKYDIIISTPLRLITVVQEEALNLGKVKHLIFDEADKLFDKTFVEQTDDILSSCTDPHLRKTMFSATIPSNVEEIAQTIMNDPIRVIIGHKEAANINIDQQLVFCGNEEGKLIAIRQLVLEGEFKPPVIIFLESITRAKALFHELLYDKLNVDVIHAERTQVQRDKIIERFKSGDLWCLICTDVLARGVDFKGVNLVINYDVPRSAQAYVHRIGRTGRGGRSGKAITFYTKQDSLAIKPIINVMKQSGCEVSEWMQKISSMSKREKESLKKGKGHVERKQISTVPKVVKQKKRQRREMIEASKKRKLSVSDAEEEAGNDST.

The disordered stretch occupies residues 1–99; that stretch reads MDIFRVLTRG…DHADDETELS (99 aa). The segment covering 45–59 has biased composition (basic and acidic residues); the sequence is ARDEQQLTKELDFFR. Positions 76–97 are enriched in acidic residues; that stretch reads GEDEVQEDNQEEDEDHADDETE. Positions 133 to 161 match the Q motif motif; that stretch reads DLITRFQFDKRLLNNLIENNFTEPTPIQS. In terms of domain architecture, Helicase ATP-binding spans 164-344; the sequence is IPILLHERDM…QTIMNDPIRV (181 aa). Residue 177–184 coordinates ATP; the sequence is APTGSGKT. The short motif at 291–294 is the DEAD box element; that stretch reads DEAD. Positions 355–517 constitute a Helicase C-terminal domain; that stretch reads NIDQQLVFCG…EVSEWMQKIS (163 aa). The segment covering 520-538 has biased composition (basic and acidic residues); sequence SKREKESLKKGKGHVERKQ. Residues 520-579 form a disordered region; sequence SKREKESLKKGKGHVERKQISTVPKVVKQKKRQRREMIEASKKRKLSVSDAEEEAGNDST. Positions 569–579 are enriched in acidic residues; sequence DAEEEAGNDST.

It belongs to the DEAD box helicase family. DDX52/ROK1 subfamily. In terms of assembly, interacts with the U3 snoRNA and is associated with the 90S and 40S pre-ribosomes.

It localises to the nucleus. The protein resides in the nucleolus. It catalyses the reaction ATP + H2O = ADP + phosphate + H(+). ATP-dependent RNA helicase involved in 40S ribosomal subunit biogenesis. Required for the processing and cleavage of 35S pre-rRNA at sites A0, A1, and A2, leading to mature 18S rRNA. This Kluyveromyces lactis (strain ATCC 8585 / CBS 2359 / DSM 70799 / NBRC 1267 / NRRL Y-1140 / WM37) (Yeast) protein is ATP-dependent RNA helicase ROK1 (ROK1).